The sequence spans 842 residues: Glucans biosynthesis glucosyltransferase H (842 aa).

6 helical membrane passes run 141–161 (LLLLTLAQTVVATWYMKTILP), 194–214 (ILLLFAVLFCWVSAGFWTALM), 513–533 (VFLTGVMSYLSAPLWFMFLAL), 570–590 (LFASTMILLFLPKLLSIILIW), 615–635 (VLLAPVRMLFHTVFVVSAFLG), and 680–700 (FLFWLAPIVFSLILSPFVSVI).

Belongs to the glycosyltransferase 2 family. OpgH subfamily.

The protein localises to the cell inner membrane. It participates in glycan metabolism; osmoregulated periplasmic glucan (OPG) biosynthesis. Functionally, involved in the biosynthesis of osmoregulated periplasmic glucans (OPGs). In Enterobacter sp. (strain 638), this protein is Glucans biosynthesis glucosyltransferase H.